Reading from the N-terminus, the 359-residue chain is UDP-N-acetylglucosamine--N-acetylmuramyl-(pentapeptide) pyrophosphoryl-undecaprenol N-acetylglucosamine transferase (359 aa).

UDP-N-acetyl-alpha-D-glucosamine contacts are provided by residues 15 to 17, Asn127, Arg166, Ser191, Ile245, 264 to 269, and Gln290; these read TGG and ALTVSE.

It belongs to the glycosyltransferase 28 family. MurG subfamily.

It localises to the cell inner membrane. It catalyses the reaction di-trans,octa-cis-undecaprenyl diphospho-N-acetyl-alpha-D-muramoyl-L-alanyl-D-glutamyl-meso-2,6-diaminopimeloyl-D-alanyl-D-alanine + UDP-N-acetyl-alpha-D-glucosamine = di-trans,octa-cis-undecaprenyl diphospho-[N-acetyl-alpha-D-glucosaminyl-(1-&gt;4)]-N-acetyl-alpha-D-muramoyl-L-alanyl-D-glutamyl-meso-2,6-diaminopimeloyl-D-alanyl-D-alanine + UDP + H(+). The protein operates within cell wall biogenesis; peptidoglycan biosynthesis. Functionally, cell wall formation. Catalyzes the transfer of a GlcNAc subunit on undecaprenyl-pyrophosphoryl-MurNAc-pentapeptide (lipid intermediate I) to form undecaprenyl-pyrophosphoryl-MurNAc-(pentapeptide)GlcNAc (lipid intermediate II). This is UDP-N-acetylglucosamine--N-acetylmuramyl-(pentapeptide) pyrophosphoryl-undecaprenol N-acetylglucosamine transferase from Pseudomonas putida (strain ATCC 700007 / DSM 6899 / JCM 31910 / BCRC 17059 / LMG 24140 / F1).